The sequence spans 335 residues: Rho guanine nucleotide exchange factor 39 (335 aa).

A DH domain is found at 22-197 (KRACTARELL…SETAQRVHTI (176 aa)). The PH domain occupies 227 to 331 (WFLRQGWLLV…WYHSLTWAIS (105 aa)).

As to expression, strongly expressed in hepatocellular carcinoma (HCC) compared with their non-cancerous counterparts.

It localises to the cell membrane. In terms of biological role, promotes cell proliferation. The protein is Rho guanine nucleotide exchange factor 39 (ARHGEF39) of Homo sapiens (Human).